We begin with the raw amino-acid sequence, 209 residues long: MSKNKVSASSGRWLKEHFDDKYVLEAQKRGYRSRAIFKIEEIQNKDKLLKSGMTVVDLGAAPGGWSQYAVEQVGDEGQVIACDILPMDSIAGVSFLQGDFREEAVLDALLERIQPDMVDVVMSDMAPNMSGNLAVDQPRAMYLVELALDMCRQVLAPNGSFTVKVFQGEGFDQYLQEVRNMFKVVKIRKPDSSRARSREVYIVATGYKG.

Residues Gly63, Trp65, Asp83, Asp99, and Asp124 each contribute to the S-adenosyl-L-methionine site. The active-site Proton acceptor is Lys164.

This sequence belongs to the class I-like SAM-binding methyltransferase superfamily. RNA methyltransferase RlmE family.

It localises to the cytoplasm. It carries out the reaction uridine(2552) in 23S rRNA + S-adenosyl-L-methionine = 2'-O-methyluridine(2552) in 23S rRNA + S-adenosyl-L-homocysteine + H(+). Its function is as follows. Specifically methylates the uridine in position 2552 of 23S rRNA at the 2'-O position of the ribose in the fully assembled 50S ribosomal subunit. The polypeptide is Ribosomal RNA large subunit methyltransferase E (Aliivibrio fischeri (strain MJ11) (Vibrio fischeri)).